The sequence spans 90 residues: Progonadoliberin-3 (90 aa).

Residues 1–23 form the signal peptide; that stretch reads MEAGSRVIMQVLLLALVVQVTLS. Gln24 carries the pyrrolidone carboxylic acid modification. Residue Gly33 is modified to Glycine amide.

The protein belongs to the GnRH family. In terms of tissue distribution, expressed only in the terminal nerve nucleus of the telencephalon.

The protein localises to the secreted. Functionally, stimulates the secretion of gonadotropins. In Haplochromis burtoni (Burton's mouthbrooder), this protein is Progonadoliberin-3 (gnrh3).